Reading from the N-terminus, the 417-residue chain is Inhibitor of growth protein 3 (417 aa).

Disordered regions lie at residues 128–203 (TPSQ…YNTN) and 286–320 (QTLS…SSSS). Basic residues predominate over residues 136-152 (HHAHSHTPVEKRKHNPS). Residues 156 to 168 (GATDHVPEKKFKS) are compositionally biased toward basic and acidic residues. Low complexity-rich tracts occupy residues 189 to 203 (NNNS…YNTN), 286 to 295 (QTLSSSSTDS), and 307 to 320 (SSSQ…SSSS). Residues 359 to 408 (PRYCICNQVSYGEMVGCDNQDCPIEWFHYGCVGLTEAPKGKWYCPQCTAA) form a PHD-type zinc finger. Residues cysteine 362, cysteine 364, cysteine 375, cysteine 380, histidine 386, cysteine 389, cysteine 402, and cysteine 405 each coordinate Zn(2+).

It belongs to the ING family. In terms of assembly, interacts with H3K4me3 and to a lesser extent with H3K4me2. Component of the NuA4 histone acetyltransferase complex.

It localises to the nucleus. In terms of biological role, component of the NuA4 histone acetyltransferase (HAT) complex which is involved in transcriptional activation of select genes principally by acetylation of nucleosomal histone H4 and H2A. This modification may both alter nucleosome - DNA interactions and promote interaction of the modified histones with other proteins which positively regulate transcription. NuA4 may also play a direct role in DNA repair when directly recruited to sites of DNA damage. This Gallus gallus (Chicken) protein is Inhibitor of growth protein 3 (ING3).